The sequence spans 251 residues: Cell division protein ZapD (251 aa).

This sequence belongs to the ZapD family. Interacts with FtsZ.

The protein localises to the cytoplasm. Functionally, cell division factor that enhances FtsZ-ring assembly. Directly interacts with FtsZ and promotes bundling of FtsZ protofilaments, with a reduction in FtsZ GTPase activity. This is Cell division protein ZapD from Paraburkholderia phymatum (strain DSM 17167 / CIP 108236 / LMG 21445 / STM815) (Burkholderia phymatum).